Reading from the N-terminus, the 746-residue chain is Protein C-mannosyl-transferase DPY19L1 (746 aa).

Residues 1–68 form a disordered region; sequence MVLQARSKHR…RAGTAAPAPD (68 aa). Residues Ser28 and Ser31 each carry the phosphoserine modification. Residues 59-68 show a composition bias toward low complexity; sequence RAGTAAPAPD. 11 helical membrane-spanning segments follow: residues 137-159, 227-247, 257-279, 307-325, 331-350, 357-374, 380-396, 405-425, 481-501, 520-540, and 562-582; these read LYYS…WMIM, ACFY…LFFI, LGGV…VMWT, LCRG…FMLP, FVLL…GYID, IIYM…LMFG, TSYY…MLAM, VSEL…TVIL, LLLP…FNDM, GELV…VLIM, and LFGW…ILAA.

It belongs to the dpy-19 family.

The protein localises to the endoplasmic reticulum membrane. It catalyses the reaction L-tryptophyl-[protein] + a di-trans,poly-cis-dolichyl beta-D-mannosyl phosphate = C-alpha-D-mannosyl-L-tryptophyl-[protein] + a di-trans,poly-cis-dolichyl phosphate + H(+). The protein operates within protein modification; protein glycosylation. C-mannosyltransferase that mediates the C-mannosylation tryptophan residues on target proteins. The reaction occurs on the luminal side of the endoplasmic reticulum and involves the transfer of a mannose unit from a dolichylphosphate mannose (Dol-P-Man) donor to an acceptor protein containing a WxxW consensus sequence. C-mannosylates the first two tryptophans in the WxxWxxWxxC sequence motif in thrombospondin (TSP) type-1 repeats of UNC5A. Regulates neurite extension during development. This chain is Protein C-mannosyl-transferase DPY19L1 (Dpy19l1), found in Mus musculus (Mouse).